The following is a 561-amino-acid chain: 4-coumarate--CoA ligase 1 (561 aa).

Positions 210, 211, 212, 213, 214, and 218 each coordinate ATP. (E)-4-coumaroyl-AMP is bound by residues Y260 and S264. K281 serves as a coordination point for CoA. The tract at residues 283 to 352 is SBD1; that stretch reads EINLLLELIQ…AKFPNAKLGQ (70 aa). The (E)-4-coumaroyl-AMP site is built by A330, Q352, G353, T357, and M365. ATP is bound by residues Q352, G353, and T357. The interval 353–420 is SBD2; the sequence is GYGMTEAGPV…IRGHQIMKGY (68 aa). 2 residues coordinate ATP: D441 and R456. K458 and K462 together coordinate (E)-4-coumaroyl-AMP. The CoA site is built by K464 and G465. K547 provides a ligand contact to ATP.

The protein belongs to the ATP-dependent AMP-binding enzyme family. Requires Mg(2+) as cofactor. Preferentially expressed in roots, bolting stems and siliques. Also detected in leaves.

The enzyme catalyses (E)-4-coumarate + ATP + CoA = (E)-4-coumaroyl-CoA + AMP + diphosphate. It carries out the reaction (E)-caffeate + ATP + CoA = (E)-caffeoyl-CoA + AMP + diphosphate. The catalysed reaction is (E)-ferulate + ATP + CoA = (E)-feruloyl-CoA + AMP + diphosphate. It catalyses the reaction (E)-4-coumarate + ATP + H(+) = (E)-4-coumaroyl-AMP + diphosphate. The enzyme catalyses (E)-4-coumaroyl-AMP + CoA = (E)-4-coumaroyl-CoA + AMP + H(+). It carries out the reaction (E)-caffeate + ATP + H(+) = (E)-caffeoyl-AMP + diphosphate. The catalysed reaction is (E)-caffeoyl-AMP + CoA = (E)-caffeoyl-CoA + AMP + H(+). It catalyses the reaction (E)-ferulate + ATP + H(+) = (E)-feruloyl-AMP + diphosphate. The enzyme catalyses (E)-feruloyl-AMP + CoA = (E)-feruloyl-CoA + AMP + H(+). Its pathway is phytoalexin biosynthesis; 3,4',5-trihydroxystilbene biosynthesis; 3,4',5-trihydroxystilbene from trans-4-coumarate: step 1/2. Functionally, produces CoA thioesters of a variety of hydroxy- and methoxy-substituted cinnamic acids, which are used to synthesize several phenylpropanoid-derived compounds, including anthocyanins, flavonoids, isoflavonoids, coumarins, lignin, suberin and wall-bound phenolics. Follows a two-step reaction mechanism, wherein the carboxylate substrate first undergoes adenylation by ATP, followed by a thioesterification in the presence of CoA to yield the final CoA thioesters. The protein is 4-coumarate--CoA ligase 1 of Arabidopsis thaliana (Mouse-ear cress).